The sequence spans 510 residues: 2,3-bisphosphoglycerate-independent phosphoglycerate mutase (510 aa).

2 residues coordinate Mn(2+): Asp-12 and Ser-62. The active-site Phosphoserine intermediate is the Ser-62. Residues His-123, 153–154, Arg-185, Arg-191, 260–263, and Lys-335 contribute to the substrate site; these read RD and RPDR. 5 residues coordinate Mn(2+): Asp-402, His-406, Asp-443, His-444, and His-461.

It belongs to the BPG-independent phosphoglycerate mutase family. Monomer. It depends on Mn(2+) as a cofactor.

The enzyme catalyses (2R)-2-phosphoglycerate = (2R)-3-phosphoglycerate. The protein operates within carbohydrate degradation; glycolysis; pyruvate from D-glyceraldehyde 3-phosphate: step 3/5. In terms of biological role, catalyzes the interconversion of 2-phosphoglycerate and 3-phosphoglycerate. The chain is 2,3-bisphosphoglycerate-independent phosphoglycerate mutase from Listeria welshimeri serovar 6b (strain ATCC 35897 / DSM 20650 / CCUG 15529 / CIP 8149 / NCTC 11857 / SLCC 5334 / V8).